Consider the following 377-residue polypeptide: Succinyl-diaminopimelate desuccinylase (377 aa).

His-67 is a Zn(2+) binding site. Asp-69 is an active-site residue. Position 100 (Asp-100) interacts with Zn(2+). Glu-134 functions as the Proton acceptor in the catalytic mechanism. Residues Glu-135, Glu-163, and His-349 each coordinate Zn(2+).

It belongs to the peptidase M20A family. DapE subfamily. In terms of assembly, homodimer. It depends on Zn(2+) as a cofactor. Requires Co(2+) as cofactor.

The enzyme catalyses N-succinyl-(2S,6S)-2,6-diaminopimelate + H2O = (2S,6S)-2,6-diaminopimelate + succinate. It participates in amino-acid biosynthesis; L-lysine biosynthesis via DAP pathway; LL-2,6-diaminopimelate from (S)-tetrahydrodipicolinate (succinylase route): step 3/3. In terms of biological role, catalyzes the hydrolysis of N-succinyl-L,L-diaminopimelic acid (SDAP), forming succinate and LL-2,6-diaminopimelate (DAP), an intermediate involved in the bacterial biosynthesis of lysine and meso-diaminopimelic acid, an essential component of bacterial cell walls. The chain is Succinyl-diaminopimelate desuccinylase from Haemophilus influenzae (strain PittEE).